A 489-amino-acid polypeptide reads, in one-letter code: Glycogen synthase (489 aa).

An ADP-alpha-D-glucose-binding site is contributed by lysine 15.

Belongs to the glycosyltransferase 1 family. Bacterial/plant glycogen synthase subfamily.

It catalyses the reaction [(1-&gt;4)-alpha-D-glucosyl](n) + ADP-alpha-D-glucose = [(1-&gt;4)-alpha-D-glucosyl](n+1) + ADP + H(+). It participates in glycan biosynthesis; glycogen biosynthesis. Its function is as follows. Synthesizes alpha-1,4-glucan chains using ADP-glucose. This chain is Glycogen synthase, found in Francisella tularensis subsp. novicida (strain U112).